Reading from the N-terminus, the 500-residue chain is Putative (R)-citramalate synthase CimA (500 aa).

The 250-residue stretch at 9–258 (LRFFDTTLRD…DTRIRTERLY (250 aa)) folds into the Pyruvate carboxyltransferase domain.

The protein belongs to the alpha-IPM synthase/homocitrate synthase family. As to quaternary structure, homodimer.

The catalysed reaction is pyruvate + acetyl-CoA + H2O = (3R)-citramalate + CoA + H(+). Its pathway is amino-acid biosynthesis; L-isoleucine biosynthesis; 2-oxobutanoate from pyruvate: step 1/3. In terms of biological role, catalyzes the condensation of pyruvate and acetyl-coenzyme A to form (R)-citramalate. In Methanosphaerula palustris (strain ATCC BAA-1556 / DSM 19958 / E1-9c), this protein is Putative (R)-citramalate synthase CimA.